We begin with the raw amino-acid sequence, 348 residues long: Eukaryotic translation initiation factor 3 subunit F (348 aa).

The MPN domain maps to 30 to 166 (VVIQPQAIFS…TRTYISAPVG (137 aa)). Positions 312 to 327 (STAIGGTGAESGGQRG) are enriched in gly residues. The tract at residues 312–348 (STAIGGTGAESGGQRGGQRNNRQRGGQQRNQAEELRA) is disordered. The span at 328-341 (GQRNNRQRGGQQRN) shows a compositional bias: low complexity.

This sequence belongs to the eIF-3 subunit F family. As to quaternary structure, component of the eukaryotic translation initiation factor 3 (eIF-3) complex.

It is found in the cytoplasm. In terms of biological role, component of the eukaryotic translation initiation factor 3 (eIF-3) complex, which is involved in protein synthesis of a specialized repertoire of mRNAs and, together with other initiation factors, stimulates binding of mRNA and methionyl-tRNAi to the 40S ribosome. The eIF-3 complex specifically targets and initiates translation of a subset of mRNAs involved in cell proliferation. The chain is Eukaryotic translation initiation factor 3 subunit F from Coccidioides immitis (strain RS) (Valley fever fungus).